The following is an 80-amino-acid chain: Late expression factor 10 (80 aa).

The protein belongs to the baculoviridae LEF-10 family.

In terms of biological role, involved in late/very late gene activation. This chain is Late expression factor 10 (LEF-10), found in Orgyia pseudotsugata multicapsid polyhedrosis virus (OpMNPV).